A 93-amino-acid chain; its full sequence is Cell division topological specificity factor (93 aa).

Belongs to the MinE family.

In terms of biological role, prevents the cell division inhibition by proteins MinC and MinD at internal division sites while permitting inhibition at polar sites. This ensures cell division at the proper site by restricting the formation of a division septum at the midpoint of the long axis of the cell. In Syntrophus aciditrophicus (strain SB), this protein is Cell division topological specificity factor.